We begin with the raw amino-acid sequence, 156 residues long: MYRVGIGFDAHPLEANKKGLYLGGVKVSEEYSSIGHSDGDALIHAIVDAILGATNAGNIGIWFPENEENRGRRSTEFLEIIRKKILAGKYEILNIDSVIIIDKVRMNPHIENIRLKLARILGISKGNINVKPKSGNTLYGNSVSVYAVCMLKKVGT.

Asp9 and His11 together coordinate a divalent metal cation. 4-CDP-2-C-methyl-D-erythritol 2-phosphate is bound by residues 9-11 (DAH) and 36-37 (HS). His44 provides a ligand contact to a divalent metal cation. 58 to 60 (NIG) contacts 4-CDP-2-C-methyl-D-erythritol 2-phosphate.

Belongs to the IspF family. As to quaternary structure, homotrimer. A divalent metal cation serves as cofactor.

It catalyses the reaction 4-CDP-2-C-methyl-D-erythritol 2-phosphate = 2-C-methyl-D-erythritol 2,4-cyclic diphosphate + CMP. Its pathway is isoprenoid biosynthesis; isopentenyl diphosphate biosynthesis via DXP pathway; isopentenyl diphosphate from 1-deoxy-D-xylulose 5-phosphate: step 4/6. Involved in the biosynthesis of isopentenyl diphosphate (IPP) and dimethylallyl diphosphate (DMAPP), two major building blocks of isoprenoid compounds. Catalyzes the conversion of 4-diphosphocytidyl-2-C-methyl-D-erythritol 2-phosphate (CDP-ME2P) to 2-C-methyl-D-erythritol 2,4-cyclodiphosphate (ME-CPP) with a corresponding release of cytidine 5-monophosphate (CMP). This Kosmotoga olearia (strain ATCC BAA-1733 / DSM 21960 / TBF 19.5.1) protein is 2-C-methyl-D-erythritol 2,4-cyclodiphosphate synthase.